The chain runs to 523 residues: Amino acid transporter protein 6 (523 aa).

The Cytoplasmic portion of the chain corresponds to 1–19 (MLNVFGVSASMPDDSRSQK). A helical transmembrane segment spans residues 20–40 (MGLLGAISYIVGNIVGSGIFI). Residues 41-51 (TPTSIIENVNS) lie on the Extracellular side of the membrane. Residues 52 to 72 (VGLSLAIWILAAFISMLGSFC) traverse the membrane as a helical segment. Residues 73–86 (YVELGTSIRLSGGD) lie on the Cytoplasmic side of the membrane. Residues 87–107 (FAYLCFMKWYPVAFAFMCIGC) form a helical membrane-spanning segment. The Extracellular portion of the chain corresponds to 108 to 145 (TINYPATLAVQAQTFAEYVFRGAGVELDETSEFWAKKL). Residues 146–166 (LGFSLIILLMFMNFFSLKTFV) traverse the membrane as a helical segment. Topologically, residues 167–173 (QRFSILA) are cytoplasmic. The helical transmembrane segment at 174-194 (SLAKIAATLLIIITGFYYLIF) threads the bilayer. At 195-214 (KHWKQNLEEPFKGSNWNPGP) the chain is on the extracellular side. The chain crosses the membrane as a helical span at residues 215-235 (FVNALFAGLFSYDGWDILNFG). The Cytoplasmic portion of the chain corresponds to 236-249 (AEEIENPKRTMPLS). Residues 250 to 270 (IIIGMTCIGVIYVAVNVAYSI) traverse the membrane as a helical segment. Residues 271-290 (VLSPTEMIASNAVAIDFANK) are Extracellular-facing. Asn289 is a glycosylation site (N-linked (GlcNAc...) asparagine). Residues 291–311 (TLGAAAFVVPVMVAILLIGSL) form a helical membrane-spanning segment. The Cytoplasmic segment spans residues 312–348 (NSTMFSASRYLQAVSRQGHIPSAISGIAPNCDSPRVA). A helical transmembrane segment spans residues 349–369 (LLVHILIAIAVSFLGDPDKLI). Residues 370-404 (NYVAFAQWSQRAFTMSALLYLRIRGRPRHPDRIQL) are Extracellular-facing. The helical transmembrane segment at 405 to 425 (PIIMPILFFLVCTSMVVISII) threads the bilayer. The Cytoplasmic segment spans residues 426 to 429 (DDFK). Residues 430 to 450 (SSAVGLGILLGGLIIFIIFVW) traverse the membrane as a helical segment. At 451–523 (DRALPSSHTF…GNGQFKCTRM (73 aa)) the chain is on the extracellular side. An N-linked (GlcNAc...) asparagine glycan is attached at Asn462. Residues 521–523 (TRM) carry the PDZ-binding motif motif.

The protein belongs to the amino acid-polyamine-organocation (APC) superfamily. In terms of assembly, interacts (via PDZ-binding motif) with nfrl-1 (via PDZ 2 domain); the interaction with nrfl-1 is required to sequester aat-6 to the apical cell membrane of intestinal cells. As to expression, expressed at the apical cell membrane of intestinal cells.

The protein localises to the apical cell membrane. In terms of biological role, amino acid transporter that mediates the uptake of the L-enantiomers of various amino acids, including L-glutamate. May play a role in promoting fertility. This Caenorhabditis elegans protein is Amino acid transporter protein 6.